The following is a 491-amino-acid chain: (S)-canadine synthase (491 aa).

Residues L6–F26 traverse the membrane as a helical segment. C434 is a heme binding site.

It belongs to the cytochrome P450 family. Heme serves as cofactor. Expressed at low levels in roots.

Its subcellular location is the endoplasmic reticulum membrane. The protein localises to the microsome membrane. The enzyme catalyses (S)-tetrahydrocolumbamine + reduced [NADPH--hemoprotein reductase] + O2 = (S)-canadine + oxidized [NADPH--hemoprotein reductase] + 2 H2O + H(+). Its function is as follows. Involved in the last but one step of the biosynthesis of berberine, an antimicrobial benzylisoquinoline alkaloid. Converts (S)-tetrahydrocolumbamine (THC) to (S)-tetrahydroberberine (THB) also called (S)-canadine. The protein is (S)-canadine synthase (CYP719A1) of Coptis japonica (Japanese goldthread).